A 760-amino-acid polypeptide reads, in one-letter code: uncharacterized protein (760 aa).

A signal peptide spans 1-20; it reads MKFKLFLGSSFFGVATLLIA. Cysteine 21 carries the N-palmitoyl cysteine lipid modification. The S-diacylglycerol cysteine moiety is linked to residue cysteine 21. Disordered regions lie at residues 221–243, 272–315, and 705–741; these read ENAA…LQLK, AKTN…TSDD, and IKAT…NDKA. Residues 272–284 are compositionally biased toward basic and acidic residues; it reads AKTNGEKGNEKQE. Positions 300-312 are enriched in polar residues; the sequence is KNTSQDKTQNTQT. The span at 705–721 shows a compositional bias: basic and acidic residues; that stretch reads IKATSKEGEQNQGKKGD.

The protein belongs to the MG185/MG260 family.

It localises to the cell membrane. This is an uncharacterized protein from Mycoplasma pneumoniae (strain ATCC 29342 / M129 / Subtype 1) (Mycoplasmoides pneumoniae).